Reading from the N-terminus, the 457-residue chain is Multidrug resistance protein MdtK (457 aa).

12 helical membrane passes run 11-31, 53-73, 93-113, 127-147, 160-180, 188-208, 243-263, 276-296, 316-336, 357-377, 387-407, and 418-438; these read LLAL…MGVV, IWLP…PVIA, VLAG…GYII, AVNY…FQVM, GMAM…IFIY, LGGV…FFCM, MPVA…ALLV, IALN…AAVT, RTGI…TVVF, LMLL…GSGV, IFFI…YILG, and PAGF…MMMW.

Belongs to the multi antimicrobial extrusion (MATE) (TC 2.A.66.1) family. MdtK subfamily.

The protein resides in the cell inner membrane. Functionally, multidrug efflux pump that functions probably as a Na(+)/drug antiporter. In Cronobacter sakazakii (strain ATCC BAA-894) (Enterobacter sakazakii), this protein is Multidrug resistance protein MdtK.